Reading from the N-terminus, the 71-residue chain is Prophage lysis protein S homolog EssD (71 aa).

This sequence belongs to the lambda phage S protein family.

This Escherichia coli (strain K12) protein is Prophage lysis protein S homolog EssD (essD).